The sequence spans 383 residues: Cytochrome b (383 aa).

4 consecutive transmembrane segments (helical) span residues 31-51 (FGSL…FLAM), 75-97 (WLMR…VHIF), 112-132 (LWCS…MGYV), and 178-198 (FFSL…IHLI). Residues histidine 81 and histidine 95 each coordinate heme b. The heme b site is built by histidine 182 and histidine 196. Position 201 (histidine 201) interacts with a ubiquinone. The next 4 helical transmembrane spans lie at 224–244 (FYTK…IFIF), 288–308 (IGGV…PFTN), 320–340 (IFKV…WVGQ), and 347–367 (YTEI…IIIP).

It belongs to the cytochrome b family. In terms of assembly, fungal cytochrome b-c1 complex contains 10 subunits; 3 respiratory subunits, 2 core proteins and 5 low-molecular weight proteins. Cytochrome b-c1 complex is a homodimer. The cofactor is heme b.

The protein localises to the mitochondrion inner membrane. Its function is as follows. Component of the ubiquinol-cytochrome c reductase complex (complex III or cytochrome b-c1 complex) that is part of the mitochondrial respiratory chain. The b-c1 complex mediates electron transfer from ubiquinol to cytochrome c. Contributes to the generation of a proton gradient across the mitochondrial membrane that is then used for ATP synthesis. This chain is Cytochrome b (cob), found in Phytophthora megasperma (Potato pink rot fungus).